The sequence spans 759 residues: Putative ATP-dependent DNA helicase YjcD (759 aa).

A disordered region spans residues 68-121; the sequence is ACEPKPSKEGKKEDDQESGVIRLPKGKAIAADPSPAVTEWHRPRSIKPGTPFVP. Over residues 69-81 the composition is skewed to basic and acidic residues; that stretch reads CEPKPSKEGKKED. In terms of domain architecture, UvrD-like helicase ATP-binding spans 134–413; it reads VGLNTDQLKA…IYLTANYRST (280 aa). Residues 158-163 and Arg411 contribute to the ATP site; that span reads GSGKTR. Residues 414–676 form the UvrD-like helicase C-terminal domain; the sequence is HPIVSSADIV…QLMTIHRSKG (263 aa).

The protein belongs to the helicase family. UvrD subfamily.

Its subcellular location is the cytoplasm. It carries out the reaction Couples ATP hydrolysis with the unwinding of duplex DNA by translocating in the 3'-5' direction.. The enzyme catalyses ATP + H2O = ADP + phosphate + H(+). In terms of biological role, may be involved in the generation of recombinogenic substrates for the subsequent action of RecA. The sequence is that of Putative ATP-dependent DNA helicase YjcD (yjcD) from Bacillus subtilis (strain 168).